The chain runs to 117 residues: UPF0102 protein YE3728 (117 aa).

It belongs to the UPF0102 family.

In Yersinia enterocolitica serotype O:8 / biotype 1B (strain NCTC 13174 / 8081), this protein is UPF0102 protein YE3728.